We begin with the raw amino-acid sequence, 599 residues long: Elongation factor 4 (599 aa).

Residues 2-184 (KNIRNFSIIA…EIVAKIPAPK (183 aa)) enclose the tr-type G domain. Residues 14–19 (DHGKST) and 131–134 (NKID) contribute to the GTP site.

Belongs to the TRAFAC class translation factor GTPase superfamily. Classic translation factor GTPase family. LepA subfamily.

It is found in the cell inner membrane. The enzyme catalyses GTP + H2O = GDP + phosphate + H(+). In terms of biological role, required for accurate and efficient protein synthesis under certain stress conditions. May act as a fidelity factor of the translation reaction, by catalyzing a one-codon backward translocation of tRNAs on improperly translocated ribosomes. Back-translocation proceeds from a post-translocation (POST) complex to a pre-translocation (PRE) complex, thus giving elongation factor G a second chance to translocate the tRNAs correctly. Binds to ribosomes in a GTP-dependent manner. The sequence is that of Elongation factor 4 from Mannheimia succiniciproducens (strain KCTC 0769BP / MBEL55E).